A 1249-amino-acid polypeptide reads, in one-letter code: Clustered mitochondria protein homolog (1249 aa).

Residues M1 to N32 form a disordered region. A Clu domain is found at D318–Q562. A compositionally biased stretch (basic and acidic residues) spans K605–E628. Disordered stretches follow at residues K605 to R636 and K868 to E903. TPR repeat units lie at residues A974–T1007, I1016–I1049, and I1058–L1091. The disordered stretch occupies residues N1174 to A1249. Positions N1176–Q1190 are enriched in polar residues.

Belongs to the CLU family. May associate with the eukaryotic translation initiation factor 3 (eIF-3) complex.

It is found in the cytoplasm. MRNA-binding protein involved in proper cytoplasmic distribution of mitochondria. This chain is Clustered mitochondria protein homolog, found in Aspergillus niger (strain ATCC MYA-4892 / CBS 513.88 / FGSC A1513).